Here is a 504-residue protein sequence, read N- to C-terminus: Glycine--tRNA ligase (504 aa).

Residues R99 and E189 each contribute to the substrate site. ATP is bound by residues 221-223, 231-236, 306-307, and 365-368; these read RNE, FRVREL, EI, and GVDR. 236–240 is a binding site for substrate; the sequence is LEQME. 361-365 lines the substrate pocket; it reads EPSAG.

This sequence belongs to the class-II aminoacyl-tRNA synthetase family. As to quaternary structure, homodimer.

It localises to the cytoplasm. It carries out the reaction tRNA(Gly) + glycine + ATP = glycyl-tRNA(Gly) + AMP + diphosphate. Catalyzes the attachment of glycine to tRNA(Gly). The polypeptide is Glycine--tRNA ligase (Deinococcus geothermalis (strain DSM 11300 / CIP 105573 / AG-3a)).